The chain runs to 328 residues: Methionyl-tRNA formyltransferase (328 aa).

Ser110–Pro113 contributes to the (6S)-5,6,7,8-tetrahydrofolate binding site.

Belongs to the Fmt family.

The catalysed reaction is L-methionyl-tRNA(fMet) + (6R)-10-formyltetrahydrofolate = N-formyl-L-methionyl-tRNA(fMet) + (6S)-5,6,7,8-tetrahydrofolate + H(+). In terms of biological role, attaches a formyl group to the free amino group of methionyl-tRNA(fMet). The formyl group appears to play a dual role in the initiator identity of N-formylmethionyl-tRNA by promoting its recognition by IF2 and preventing the misappropriation of this tRNA by the elongation apparatus. The chain is Methionyl-tRNA formyltransferase from Prochlorococcus marinus (strain MIT 9312).